The chain runs to 682 residues: Elongation factor G (682 aa).

The tr-type G domain occupies 8 to 282 (QKFRNFGIMA…AVVDYLPSPV (275 aa)). GTP-binding positions include 17-24 (AHIDAGKT), 81-85 (DTPGH), and 135-138 (NKMD).

The protein belongs to the TRAFAC class translation factor GTPase superfamily. Classic translation factor GTPase family. EF-G/EF-2 subfamily.

It is found in the cytoplasm. Its function is as follows. Catalyzes the GTP-dependent ribosomal translocation step during translation elongation. During this step, the ribosome changes from the pre-translocational (PRE) to the post-translocational (POST) state as the newly formed A-site-bound peptidyl-tRNA and P-site-bound deacylated tRNA move to the P and E sites, respectively. Catalyzes the coordinated movement of the two tRNA molecules, the mRNA and conformational changes in the ribosome. This is Elongation factor G from Malacoplasma penetrans (strain HF-2) (Mycoplasma penetrans).